A 61-amino-acid polypeptide reads, in one-letter code: UPF0181 protein Ent638_2380 (61 aa).

This sequence belongs to the UPF0181 family.

This chain is UPF0181 protein Ent638_2380, found in Enterobacter sp. (strain 638).